Reading from the N-terminus, the 948-residue chain is UvrABC system protein A (948 aa).

33–40 (GLSGSGKS) is an ATP binding site. A C4-type zinc finger spans residues 252 to 279 (CPICGFSIGELEPRMFSFNSPFGACPTC). ABC transporter domains lie at 309-587 (WIPT…KKSL) and 607-935 (ASDR…KYLK). Residue 639–646 (GVSGSGKS) coordinates ATP. The segment at 738–764 (CEACKGDGIIKIEMHFLPDVYVPCEVC) adopts a C4-type zinc-finger fold.

This sequence belongs to the ABC transporter superfamily. UvrA family. Forms a heterotetramer with UvrB during the search for lesions.

The protein resides in the cytoplasm. Functionally, the UvrABC repair system catalyzes the recognition and processing of DNA lesions. UvrA is an ATPase and a DNA-binding protein. A damage recognition complex composed of 2 UvrA and 2 UvrB subunits scans DNA for abnormalities. When the presence of a lesion has been verified by UvrB, the UvrA molecules dissociate. This Staphylococcus aureus (strain MSSA476) protein is UvrABC system protein A.